The chain runs to 125 residues: Snaclec B7 (125 aa).

3 disulfides stabilise this stretch: cysteine 2/cysteine 13, cysteine 30/cysteine 119, and cysteine 96/cysteine 111. The C-type lectin domain maps to 9–120; that stretch reads HEGHCYKVFK…CNISQYFVCQ (112 aa). A glycan (N-linked (GlcNAc...) asparagine) is linked at asparagine 112.

This sequence belongs to the snaclec family. In terms of assembly, heterodimer; disulfide-linked. In terms of tissue distribution, expressed by the venom gland.

The protein resides in the secreted. In terms of biological role, interferes with one step of hemostasis (modulation of platelet aggregation, or coagulation cascade, for example). In Macrovipera lebetinus (Levantine viper), this protein is Snaclec B7.